The sequence spans 407 residues: UPF0597 protein NAMH_0191 (407 aa).

The protein belongs to the UPF0597 family.

The polypeptide is UPF0597 protein NAMH_0191 (Nautilia profundicola (strain ATCC BAA-1463 / DSM 18972 / AmH)).